The primary structure comprises 149 residues: UPF0310 protein msl3206 (149 aa).

The protein belongs to the UPF0310 family.

The sequence is that of UPF0310 protein msl3206 from Mesorhizobium japonicum (strain LMG 29417 / CECT 9101 / MAFF 303099) (Mesorhizobium loti (strain MAFF 303099)).